The following is a 521-amino-acid chain: MSGETEIDDPEVSDGASENDYSDHEQELDVVGKEDDNQEMAEQKVRPDGDENGNTVGAAATATKPKFDPKDPLRPRRKKARRACFACQRAHLTCGDERPCQRCIKRGLADACQDGVRKKAKYLHDAPPEALRPVLGPTYNQQVSNNRATAASTPTEPSTGMGNFFTQPDTSPSYPLFAANQQGQMPPPLQNRLSFGSNQPSPISPTFHTVGNRPAGMQGISLPQVSNDSHAAFGGGAFFDPSNPALFNFDLEGLNFGNHYGALEFGMLGHMASGSAETPPQDSSAGMPQNVGDLGYNNNPAFNNNPPFNQIYSHDALPDFAVAPPGAHRPAKRQDTKSGPSGKLGPSSALGKRNRDPSSIYDTVHEPYSYTTGFHSLTAFIQKRFSPNKTLRIAKSLASIRPSFISCTKTLNRQDLVFMEKCFQRTLFEYEDFMLNCCTPTLVCRRTGEIAAVNKEFTLLTGWRKEVLLGNEPNLNINTGNSGASSSGSSGRGSFTTPRMRPINLVDSNTASLNSTKILQD.

A compositionally biased stretch (acidic residues) spans 1–12 (MSGETEIDDPEV). A disordered region spans residues 1–75 (MSGETEIDDP…KFDPKDPLRP (75 aa)). Composition is skewed to basic and acidic residues over residues 21–49 (YSDH…RPDG) and 65–74 (PKFDPKDPLR). Residues 84 to 112 (CFACQRAHLTCGDERPCQRCIKRGLADAC) constitute a DNA-binding region (zn(2)-C6 fungal-type). Disordered regions lie at residues 273 to 308 (SGSA…NPPF), 322 to 358 (VAPP…RDPS), and 478 to 501 (NTGN…PRMR). The segment covering 275 to 287 (SAETPPQDSSAGM) has biased composition (polar residues). Composition is skewed to low complexity over residues 297-308 (NNNPAFNNNPPF), 337-351 (KSGP…SALG), and 480-494 (GNSG…GRGS). Residues 426–497 (TLFEYEDFML…GSSGRGSFTT (72 aa)) enclose the PAS domain.

The protein belongs to the ERT1/acuK family.

The protein resides in the nucleus. In terms of biological role, transcription factor which regulates nonfermentable carbon utilization. Activator of gluconeogenetic genes. The chain is Transcription activator of gluconeogenesis SS1G_02293 from Sclerotinia sclerotiorum (strain ATCC 18683 / 1980 / Ss-1) (White mold).